Reading from the N-terminus, the 938-residue chain is Isoleucine--tRNA ligase (938 aa).

The 'HIGH' region signature appears at 58-68 (PYANGSIHIGH). Lysine 183 carries the post-translational modification N6-acetyllysine. Glutamate 561 is a binding site for L-isoleucyl-5'-AMP. A 'KMSKS' region motif is present at residues 602–606 (KMSKS). Lysine 605 is an ATP binding site. Zn(2+)-binding residues include cysteine 901, cysteine 904, cysteine 921, and cysteine 924.

The protein belongs to the class-I aminoacyl-tRNA synthetase family. IleS type 1 subfamily. As to quaternary structure, monomer. Requires Zn(2+) as cofactor.

Its subcellular location is the cytoplasm. It carries out the reaction tRNA(Ile) + L-isoleucine + ATP = L-isoleucyl-tRNA(Ile) + AMP + diphosphate. In terms of biological role, catalyzes the attachment of isoleucine to tRNA(Ile). As IleRS can inadvertently accommodate and process structurally similar amino acids such as valine, to avoid such errors it has two additional distinct tRNA(Ile)-dependent editing activities. One activity is designated as 'pretransfer' editing and involves the hydrolysis of activated Val-AMP. The other activity is designated 'posttransfer' editing and involves deacylation of mischarged Val-tRNA(Ile). The polypeptide is Isoleucine--tRNA ligase (Escherichia coli O45:K1 (strain S88 / ExPEC)).